Here is a 128-residue protein sequence, read N- to C-terminus: Large ribosomal subunit protein bL12 (128 aa).

This sequence belongs to the bacterial ribosomal protein bL12 family. In terms of assembly, homodimer. Part of the ribosomal stalk of the 50S ribosomal subunit. Forms a multimeric L10(L12)X complex, where L10 forms an elongated spine to which 2 to 4 L12 dimers bind in a sequential fashion. Binds GTP-bound translation factors.

Its function is as follows. Forms part of the ribosomal stalk which helps the ribosome interact with GTP-bound translation factors. Is thus essential for accurate translation. The polypeptide is Large ribosomal subunit protein bL12 (Picosynechococcus sp. (strain ATCC 27264 / PCC 7002 / PR-6) (Agmenellum quadruplicatum)).